Consider the following 324-residue polypeptide: Dermonecrotic toxin Hl-PLD1 (324 aa).

A signal peptide spans 1–35 (MAHCYYNSKRGCNRVMKTVALVVLISTVMVEESRG). His50 is an active-site residue. Positions 70 and 72 each coordinate Mg(2+). The active-site Nucleophile is the His86. 2 disulfide bridges follow: Cys90/Cys96 and Cys92/Cys236. A Mg(2+)-binding site is contributed by Asp130.

The protein belongs to the arthropod phospholipase D family. Class II subfamily. Mg(2+) is required as a cofactor. In terms of tissue distribution, expressed by the venom gland.

The protein resides in the secreted. The enzyme catalyses an N-(acyl)-sphingosylphosphocholine = an N-(acyl)-sphingosyl-1,3-cyclic phosphate + choline. It catalyses the reaction an N-(acyl)-sphingosylphosphoethanolamine = an N-(acyl)-sphingosyl-1,3-cyclic phosphate + ethanolamine. The catalysed reaction is a 1-acyl-sn-glycero-3-phosphocholine = a 1-acyl-sn-glycero-2,3-cyclic phosphate + choline. It carries out the reaction a 1-acyl-sn-glycero-3-phosphoethanolamine = a 1-acyl-sn-glycero-2,3-cyclic phosphate + ethanolamine. Functionally, dermonecrotic toxins cleave the phosphodiester linkage between the phosphate and headgroup of certain phospholipids (sphingolipid and lysolipid substrates), forming an alcohol (often choline) and a cyclic phosphate. This toxin acts on sphingomyelin (SM) with a high activity. It may also act on ceramide phosphoethanolamine (CPE), lysophosphatidylcholine (LPC) and lysophosphatidylethanolamine (LPE), but not on lysophosphatidylserine (LPS), and lysophosphatidylglycerol (LPG). It acts by transphosphatidylation, releasing exclusively cyclic phosphate products as second products. In vivo, shows dermonecrotic activity when intradermally injected into rabbit skin and is lethal to mice. Induces increased vascular permeability, edema, inflammatory response, and platelet aggregation. Does not show hemolytic activity (at up to 50 ug). The sequence is that of Dermonecrotic toxin Hl-PLD1 from Hemiscorpius lepturus (Scorpion).